The primary structure comprises 176 residues: MKQFECMYTLINIHEAETFKCMYTLMHPLIDIGVVWGDDGVTAIILLEGVKKYSNDSSPPMAIKKLLDSIRMFLDGCEVDFDLSVLDFGGCTEYQRRVLDVVSSIPRGSTLTYSEVAARAGGSPRSAAGALSRNPFPLVIPCHRVIRSDGNAGGYQGGVKLKKRLLEMEGVSLEGQ.

Catalysis depends on Cys142, which acts as the Nucleophile; methyl group acceptor.

Belongs to the MGMT family.

The protein resides in the cytoplasm. The catalysed reaction is a 6-O-methyl-2'-deoxyguanosine in DNA + L-cysteinyl-[protein] = S-methyl-L-cysteinyl-[protein] + a 2'-deoxyguanosine in DNA. It catalyses the reaction a 4-O-methyl-thymidine in DNA + L-cysteinyl-[protein] = a thymidine in DNA + S-methyl-L-cysteinyl-[protein]. Involved in the cellular defense against the biological effects of O6-methylguanine (O6-MeG) and O4-methylthymine (O4-MeT) in DNA. Repairs the methylated nucleobase in DNA by stoichiometrically transferring the methyl group to a cysteine residue in the enzyme. This is a suicide reaction: the enzyme is irreversibly inactivated. This chain is Methylated-DNA--protein-cysteine methyltransferase, found in Methanothermobacter thermautotrophicus (strain ATCC 29096 / DSM 1053 / JCM 10044 / NBRC 100330 / Delta H) (Methanobacterium thermoautotrophicum).